We begin with the raw amino-acid sequence, 209 residues long: Uracil phosphoribosyltransferase (209 aa).

5-phospho-alpha-D-ribose 1-diphosphate contacts are provided by residues Arg-79, Arg-104, and 131–139 (DPMLATGNS). Uracil is bound by residues Ile-194 and 199–201 (GDA). Asp-200 lines the 5-phospho-alpha-D-ribose 1-diphosphate pocket.

Belongs to the UPRTase family. Mg(2+) is required as a cofactor.

The enzyme catalyses UMP + diphosphate = 5-phospho-alpha-D-ribose 1-diphosphate + uracil. It functions in the pathway pyrimidine metabolism; UMP biosynthesis via salvage pathway; UMP from uracil: step 1/1. Its activity is regulated as follows. Allosterically activated by GTP. Its function is as follows. Catalyzes the conversion of uracil and 5-phospho-alpha-D-ribose 1-diphosphate (PRPP) to UMP and diphosphate. This chain is Uracil phosphoribosyltransferase, found in Rhizobium rhizogenes (strain K84 / ATCC BAA-868) (Agrobacterium radiobacter).